The primary structure comprises 114 residues: NADH-ubiquinone oxidoreductase chain 3 (114 aa).

Helical transmembrane passes span A3–L23, F54–F74, and I85–W105.

It belongs to the complex I subunit 3 family.

It localises to the mitochondrion membrane. The catalysed reaction is a ubiquinone + NADH + 5 H(+)(in) = a ubiquinol + NAD(+) + 4 H(+)(out). Functionally, core subunit of the mitochondrial membrane respiratory chain NADH dehydrogenase (Complex I) that is believed to belong to the minimal assembly required for catalysis. Complex I functions in the transfer of electrons from NADH to the respiratory chain. The immediate electron acceptor for the enzyme is believed to be ubiquinone. This is NADH-ubiquinone oxidoreductase chain 3 (mt-nd3) from Xenopus laevis (African clawed frog).